Reading from the N-terminus, the 405-residue chain is Imidazolonepropionase (405 aa).

2 residues coordinate Fe(3+): His73 and His75. The Zn(2+) site is built by His73 and His75. Residues Arg82, Tyr145, and His178 each coordinate 4-imidazolone-5-propanoate. Residue Tyr145 participates in N-formimidoyl-L-glutamate binding. His243 provides a ligand contact to Fe(3+). Residue His243 participates in Zn(2+) binding. A 4-imidazolone-5-propanoate-binding site is contributed by Gln246. Asp318 provides a ligand contact to Fe(3+). Residue Asp318 coordinates Zn(2+). N-formimidoyl-L-glutamate contacts are provided by Asn320 and Gly322. Thr323 contacts 4-imidazolone-5-propanoate.

Belongs to the metallo-dependent hydrolases superfamily. HutI family. Zn(2+) is required as a cofactor. It depends on Fe(3+) as a cofactor.

Its subcellular location is the cytoplasm. The catalysed reaction is 4-imidazolone-5-propanoate + H2O = N-formimidoyl-L-glutamate. Its pathway is amino-acid degradation; L-histidine degradation into L-glutamate; N-formimidoyl-L-glutamate from L-histidine: step 3/3. Its function is as follows. Catalyzes the hydrolytic cleavage of the carbon-nitrogen bond in imidazolone-5-propanoate to yield N-formimidoyl-L-glutamate. It is the third step in the universal histidine degradation pathway. In Brucella suis biovar 1 (strain 1330), this protein is Imidazolonepropionase.